We begin with the raw amino-acid sequence, 233 residues long: MAKLTKRARLIREKVEVTKNYDINEAVALLKELATAKFVESVDVAVNLGVDPRKSDQNVRGATVLPHGTGREVRVAVFTQGANAEAATAAGAELVGMDELAAQVKAGEMNFDVVIASPDAMRVVGQLGQILGPRGLMPNPKTGTVTPNVAEAVKNAKAGQVRYRTDKNGIIHTTIGKVDFETVQLKENLEALIGALVKAKPASAKGVFLKKVSISTTMGAGVAVDQATLAKAL.

Belongs to the universal ribosomal protein uL1 family. In terms of assembly, part of the 50S ribosomal subunit.

In terms of biological role, binds directly to 23S rRNA. The L1 stalk is quite mobile in the ribosome, and is involved in E site tRNA release. Its function is as follows. Protein L1 is also a translational repressor protein, it controls the translation of the L11 operon by binding to its mRNA. The chain is Large ribosomal subunit protein uL1 from Shewanella woodyi (strain ATCC 51908 / MS32).